The chain runs to 524 residues: MIRRAPFLILLRFCRMGKMACSGYPPFQGRIVLSEMPAHRLAALIRSKEVSALEVAESFIDNIEASDSRICAFLYTDFSYTRDVARRVDEELKSATKLSPLAGVPIAVKDMILTRDMPTTAGSKILEGWIPPYNATVIERISRARMPILGKTNQDEFGMGSSTEYSAYKTTRNPWDLSRTAGGSGGGSSAAVSASQAPLALGTDTGGSIRLPAHCTGTVGIRPTYGSVSRYGVIALASSFDQVGPCSSNILDAALLHEVIAGYDPADAVSIKDQDLNFSQAAYEGANRGISGVRLGFVNPSNWCNSKITDLFGRTLKSLESEGAVLHEVQFPNFDHAVQAYYLIMQAEASSNLSRYDSIRFGPQEMAASASGTVSKTRSIRFGPEVKRRILLGTHILSAGYYDDFYMSAQKIRLLVKRDFAKIFSLVDVLLLPTAPTPAFKLGEKIDHHTSMYKSDTATTPASLAGLPAGSIPMGVIDGLPVGLQIIAPGQFDSRVYSTGAAIEQIIGDIHAMKNTKHNTGQTA.

Active-site charge relay system residues include Lys-109 and Ser-184. The Acyl-ester intermediate role is filled by Ser-208.

It belongs to the amidase family. GatA subfamily. Heterotrimer of A, B and C subunits.

The catalysed reaction is L-glutamyl-tRNA(Gln) + L-glutamine + ATP + H2O = L-glutaminyl-tRNA(Gln) + L-glutamate + ADP + phosphate + H(+). Allows the formation of correctly charged Gln-tRNA(Gln) through the transamidation of misacylated Glu-tRNA(Gln) in organisms which lack glutaminyl-tRNA synthetase. The reaction takes place in the presence of glutamine and ATP through an activated gamma-phospho-Glu-tRNA(Gln). The protein is Glutamyl-tRNA(Gln) amidotransferase subunit A of Tropheryma whipplei (strain Twist) (Whipple's bacillus).